Reading from the N-terminus, the 320-residue chain is MSVGFIGAGQLAYALARGFTAAGILSAHKIIASSPEMNLPTVSALRKMGVNLTRSNKETVKHSDVLFLAVKPHIIPFILDEIGADVQAGHIVVSCAAGVTISSVEKKLMAFQPAPKVIRCMTNTPVVVQEGATVYATGTHALVEDGQLLEQLMSSVGFCTEVEEDLIDAVTGLSGSGPAYAFMALDALADGGVKMGLPRRLAIQLGAQALLGAAKMLLDSEQHPCQLKDNVCSPGGATIHALHFLESGGFRSLLINAVEASCIRTRELQSMADQEKISPAALKKTLLDRVKLESPTVSTLTPSSPGKLLTRSLALGGKKD.

At serine 2 the chain carries N-acetylserine. NADP(+)-binding positions include 6–11 (IGAGQL) and serine 34. 9 residues coordinate NADPH: alanine 8, glutamine 10, leucine 11, serine 34, glutamate 36, asparagine 56, valine 70, lysine 71, and alanine 97. Residues asparagine 56, 69 to 72 (AVKP), and 95 to 97 (CAA) each bind NADP(+). Glutamate 164 contacts L-proline. Residue asparagine 230 participates in NADPH binding. 2 residues coordinate L-proline: alanine 237 and threonine 238. Over residues 296 to 305 (TVSTLTPSSP) the composition is skewed to low complexity. The interval 296–320 (TVSTLTPSSPGKLLTRSLALGGKKD) is disordered. Serine 304 is subject to Phosphoserine.

It belongs to the pyrroline-5-carboxylate reductase family. As to quaternary structure, homodecamer; composed of 5 homodimers. Interacts with LTO1.

The protein localises to the cytoplasm. It is found in the mitochondrion. It catalyses the reaction L-proline + NADP(+) = (S)-1-pyrroline-5-carboxylate + NADPH + 2 H(+). The enzyme catalyses L-proline + NAD(+) = (S)-1-pyrroline-5-carboxylate + NADH + 2 H(+). It participates in amino-acid biosynthesis; L-proline biosynthesis; L-proline from L-glutamate 5-semialdehyde: step 1/1. Oxidoreductase that catalyzes the last step in proline biosynthesis, which corresponds to the reduction of pyrroline-5-carboxylate to L-proline using NAD(P)H. At physiologic concentrations, has higher specific activity in the presence of NADH. Involved in cellular response to oxidative stress. In some cell types, such as erythrocytes, its primary function may be the generation of NADP(+). This Pongo abelii (Sumatran orangutan) protein is Pyrroline-5-carboxylate reductase 2 (PYCR2).